A 640-amino-acid polypeptide reads, in one-letter code: Threonine--tRNA ligase (640 aa).

One can recognise a TGS domain in the interval 1–59 (MKIKVKLPDGKEKEYDRGITPAEIAKELGVKKAIGAVVNGELWDLKRPIENDCELRLVT). The segment at 240-531 (DHRKLGPHLE…LIEHFAGAFP (292 aa)) is catalytic. The Zn(2+) site is built by C332, H383, and H508.

The protein belongs to the class-II aminoacyl-tRNA synthetase family. Homodimer. The cofactor is Zn(2+).

The protein resides in the cytoplasm. It carries out the reaction tRNA(Thr) + L-threonine + ATP = L-threonyl-tRNA(Thr) + AMP + diphosphate + H(+). Catalyzes the attachment of threonine to tRNA(Thr) in a two-step reaction: L-threonine is first activated by ATP to form Thr-AMP and then transferred to the acceptor end of tRNA(Thr). Also edits incorrectly charged L-seryl-tRNA(Thr). This chain is Threonine--tRNA ligase, found in Thermotoga sp. (strain RQ2).